The chain runs to 348 residues: Protein RecA (348 aa).

65 to 72 (GPESSGKT) serves as a coordination point for ATP.

This sequence belongs to the RecA family.

The protein localises to the cytoplasm. Functionally, can catalyze the hydrolysis of ATP in the presence of single-stranded DNA, the ATP-dependent uptake of single-stranded DNA by duplex DNA, and the ATP-dependent hybridization of homologous single-stranded DNAs. It interacts with LexA causing its activation and leading to its autocatalytic cleavage. This is Protein RecA from Saccharophagus degradans (strain 2-40 / ATCC 43961 / DSM 17024).